A 132-amino-acid chain; its full sequence is MSGKGKVHGGKGKSSEAAKSSTSHSARAGLQFPVGRIKRYLKRTAQNKIRVGSKSAIYLTAVLEYLTAEVLELAGNAAKDLKVKRITPRHLQLAIRGDEELDNLIKATIAYGGVLPHINKALLLKVEKKKQK.

The segment covering 1-11 (MSGKGKVHGGK) has biased composition (basic residues). The tract at residues 1-30 (MSGKGKVHGGKGKSSEAAKSSTSHSARAGL) is disordered. At Ser-2 the chain carries N-acetylserine. Lys-4, Lys-11, and Lys-13 each carry N6-acetyllysine. Residues 15–26 (SEAAKSSTSHSA) show a composition bias toward low complexity.

The protein belongs to the histone H2A family. As to quaternary structure, the nucleosome is a histone octamer containing two molecules each of H2A, H2B, H3 and H4 assembled in one H3-H4 heterotetramer and two H2A-H2B heterodimers. The octamer wraps approximately 147 bp of DNA. H2A or its variant H2A.Z forms a heterodimer with H2B. H2A.Z associates with the VPS72/SWC2 subunit of the SWR1 chromatin remodeling complex. Also interacts with RBP1/DNA-directed RNA polymerase II largest subunit. Acetylated once deposited into chromatin.

The protein resides in the nucleus. It localises to the chromosome. In terms of biological role, variant histone H2A which can replace H2A in some nucleosomes. Nucleosomes wrap and compact DNA into chromatin, limiting DNA accessibility to the cellular machineries which require DNA as a template. Histones thereby play a central role in transcription regulation, DNA repair, DNA replication and chromosomal stability. DNA accessibility is regulated via a complex set of post-translational modifications of histones, also called histone code, and nucleosome remodeling. This variant is enriched at promoters, it may keep them in a repressed state until the appropriate activation signal is received. Near telomeres, it may counteract gene silencing caused by the spread of heterochromatin proteins. Required for the RNA polymerase II and SPT15/TBP recruitment to the target genes. Involved in chromosome stability. This chain is Histone H2A.Z (HTZ1), found in Scheffersomyces stipitis (strain ATCC 58785 / CBS 6054 / NBRC 10063 / NRRL Y-11545) (Yeast).